The sequence spans 130 residues: Small ribosomal subunit protein uS9 (130 aa).

The protein belongs to the universal ribosomal protein uS9 family.

This Burkholderia mallei (strain NCTC 10247) protein is Small ribosomal subunit protein uS9.